The following is a 432-amino-acid chain: Adenylosuccinate synthetase (432 aa).

Residues 13-19 and 41-43 contribute to the GTP site; these read GDEGKGK and GHT. The active-site Proton acceptor is D14. D14 and G41 together coordinate Mg(2+). Residues 14 to 17, 39 to 42, T130, R144, Q225, T240, and R304 contribute to the IMP site; these read DEGK and NAGH. The active-site Proton donor is H42. 300–306 contributes to the substrate binding site; it reads ATTGRRR. Residues R306, 332–334, and 415–417 each bind GTP; these read KLD and STG.

Belongs to the adenylosuccinate synthetase family. In terms of assembly, homodimer. Mg(2+) serves as cofactor.

The protein resides in the cytoplasm. It catalyses the reaction IMP + L-aspartate + GTP = N(6)-(1,2-dicarboxyethyl)-AMP + GDP + phosphate + 2 H(+). It participates in purine metabolism; AMP biosynthesis via de novo pathway; AMP from IMP: step 1/2. Functionally, plays an important role in the de novo pathway of purine nucleotide biosynthesis. Catalyzes the first committed step in the biosynthesis of AMP from IMP. The chain is Adenylosuccinate synthetase from Cronobacter sakazakii (strain ATCC BAA-894) (Enterobacter sakazakii).